The following is a 199-amino-acid chain: MKFTTLATLALGAVSALAAPVTELESRQLFCRDVYVFFARGTGEVGTLGTVVGPGLSAAVKLAVRDSVEFEGIDYPALVSGYLAGGDRGGARTMANKVSQTASRCPNAKIFISGYSQGAQVTHLAARQLSAADQARVTGVVTFGDPYRDDALPGGLQSRRKTYCNVGDLICAGLPTLLAPHFTYGSDTPDAARWIAARV.

Positions 1 to 18 (MKFTTLATLALGAVSALA) are cleaved as a signal peptide. A propeptide spanning residues 19–27 (APVTELESR) is cleaved from the precursor. A Pyrrolidone carboxylic acid modification is found at Gln-28. An intrachain disulfide couples Cys-31 to Cys-105. Catalysis depends on Ser-116, which acts as the Nucleophile. A disulfide bridge connects residues Cys-164 and Cys-171. Residue Asp-168 is part of the active site. The active-site Proton donor/acceptor is His-181.

This sequence belongs to the cutinase family. The 2 disulfide bonds play a critical role in holding the catalytic residues in juxta-position; reduction of the disulfide bridges results in the complete inactivation of the enzyme.

The enzyme catalyses cutin + H2O = cutin monomers.. In terms of biological role, catalyzes the hydrolysis of complex carboxylic polyesters found in the cell wall of plants. Degrades cutin, a macromolecule that forms the structure of the plant cuticle. Also degrades suberin, a specialized macromolecule found in the cell wall of various plant tissues. This Coprinopsis cinerea (Inky cap fungus) protein is Cutinase CUT1.